Consider the following 475-residue polypeptide: ADP-ribosyltransferase toxin AexT (475 aa).

The region spanning 93–226 (VSPEDLQRLM…LQRAVKAEVA (134 aa)) is the Bacterial Rho-GAP domain. Residues 260 to 436 (EGLQEQFGLE…RVLEEASLGE (177 aa)) form the TR mART core domain. Catalysis depends on residues arginine 340, serine 364, and glutamate 403.

Its subcellular location is the secreted. In terms of biological role, directly involved in the toxicity for RTG-2 (rainbow trout gonad) fish cells. The sequence is that of ADP-ribosyltransferase toxin AexT (aexT) from Aeromonas salmonicida.